An 897-amino-acid chain; its full sequence is Translation initiation factor IF-2 (897 aa).

The interval 52–310 (EHGSAPDKLT…LLQQGFQKPA (259 aa)) is disordered. The span at 68–82 (STLNVPGTGGKSKSV) shows a compositional bias: polar residues. Basic and acidic residues-rich tracts occupy residues 85–159 (EVRK…KDKV) and 166–217 (EMTK…ENEK). Positions 256-272 (GRTRTASKTARPQKKGN) are enriched in basic residues. Basic and acidic residues predominate over residues 273-286 (KHAESKADREEARA). Positions 396 to 565 (PRAPVVTIMG…LLQAEVLELK (170 aa)) constitute a tr-type G domain. Positions 405–412 (GHVDHGKT) are G1. 405 to 412 (GHVDHGKT) contacts GTP. Positions 430–434 (GITQH) are G2. Residues 451–454 (DTPG) are G3. GTP is bound by residues 451 to 455 (DTPGH) and 505 to 508 (NKID). The tract at residues 505–508 (NKID) is G4. A G5 region spans residues 541–543 (SAK).

This sequence belongs to the TRAFAC class translation factor GTPase superfamily. Classic translation factor GTPase family. IF-2 subfamily.

The protein resides in the cytoplasm. Its function is as follows. One of the essential components for the initiation of protein synthesis. Protects formylmethionyl-tRNA from spontaneous hydrolysis and promotes its binding to the 30S ribosomal subunits. Also involved in the hydrolysis of GTP during the formation of the 70S ribosomal complex. This Enterobacter cloacae protein is Translation initiation factor IF-2 (infB).